A 478-amino-acid chain; its full sequence is Trigger factor (478 aa).

The interval 1–41 (MAELADAPDLGSGARKGVRVRLPPPAPHKNGGKNESRGSGQ) is disordered. Residues 197–279 (GDMLVVEYEV…IKEIKKKVLP (83 aa)) enclose the PPIase FKBP-type domain. Residues 455–472 (VEQKQEEEKKEEKEEVKN) show a composition bias toward basic and acidic residues. The tract at residues 455–478 (VEQKQEEEKKEEKEEVKNESQGNT) is disordered.

Belongs to the FKBP-type PPIase family. Tig subfamily.

It is found in the cytoplasm. It catalyses the reaction [protein]-peptidylproline (omega=180) = [protein]-peptidylproline (omega=0). Involved in protein export. Acts as a chaperone by maintaining the newly synthesized protein in an open conformation. Functions as a peptidyl-prolyl cis-trans isomerase. This chain is Trigger factor, found in Aquifex aeolicus (strain VF5).